Consider the following 590-residue polypeptide: DELLA protein GAI1 (590 aa).

A compositionally biased stretch (basic residues) spans 1-10; that stretch reads MKREYHHPHH. The disordered stretch occupies residues 1–28; sequence MKREYHHPHHPTCSTSPTGKGKMWDADP. A DELLA motif motif is present at residues 35-39; sequence DELLA. Residues 153-182 form a disordered region; the sequence is HIEQPPQQPPAPPLYQRDNKRLKPTTSATA. The 371-residue stretch at 205–575 folds into the GRAS domain; sequence VDSQETGIRL…RPLIATSAWQ (371 aa). The interval 212–266 is leucine repeat I (LRI); it reads IRLVHTLMACAEAVQQENLKLAEALVKQIGFLAVSQAGAMRKVATYFAEGLARRI. The segment at 284–349 is VHIID; the sequence is QMHFYETCPY…GGPPSFRLTG (66 aa). Residues 315–319 carry the VHIID motif; sequence VHVID. A leucine repeat II (LRII) region spans residues 363–395; sequence EVGWKLAQLAETIHVEFEYRGFVANSLADLDAS. Positions 405 to 496 are PFYRE; the sequence is VAVNSVFELH…EVYLGQQICN (92 aa). Residues 413–417 carry the LXXLL motif motif; sequence LHSLL. Residues 499 to 575 are SAW; it reads ACEGPERVER…RPLIATSAWQ (77 aa).

It belongs to the GRAS family. DELLA subfamily. In terms of processing, phosphorylated. Ubiquitinated. Upon GA application it is ubiquitinated, leading to its subsequent degradation.

Its subcellular location is the nucleus. In terms of biological role, probable transcriptional regulator that acts as a repressor of the gibberellin (GA) signaling pathway. Probably acts by participating in large multiprotein complexes that repress transcription of GA-inducible genes. Upon GA application, it is degraded by the proteasome, allowing the GA signaling pathway. The sequence is that of DELLA protein GAI1 (GAI1) from Vitis vinifera (Grape).